The sequence spans 333 residues: Ribosome biogenesis regulatory protein homolog (333 aa).

Disordered regions lie at residues 227-248 (KANV…VSGE) and 271-333 (AAAV…ARKG). A compositionally biased stretch (basic and acidic residues) spans 278 to 295 (LREKKEKSERKGAKDQTR). Positions 324–333 (GANKAKARKG) are enriched in basic residues.

This sequence belongs to the RRS1 family.

The protein resides in the nucleus. It is found in the nucleolus. Involved in ribosomal large subunit assembly. This chain is Ribosome biogenesis regulatory protein homolog, found in Caenorhabditis elegans.